A 446-amino-acid polypeptide reads, in one-letter code: MHIVVVGLNNKTAPVSIREQVSFGEHEMKGAVVALRDEKSIFESVIVSTCNRTELYVVTDQPHTGRYYTKRFLANWFGLTMEELEPYLFIHEGFDAMKHLFRVTSGLDSMIVGETQILGQVKTSFFTAQKLETTGTVFNKLFKEAVTLAKRAHAETGIGENAVSVSAAAVTLAEQLLGSLEDKSIVVIGAGETGELTTLNLYEAGARDITVFNRTLAKAEEVANRFEGSAHSINEMQCGLLRADIVISSTGAKRAIIKREDIAAAQLFRSDRPFLLIDIAVPRDIEPTAGDLPGVHLYDVDDLTSIVQQNMAERMKEAAKIERRIEAAIAEFEGWMTTLGVVPIITELRDQSLKIQQETMQSLERKLPNMTNREKTVIGKHMKSIINQLLREPLSYIKDAAAKPDAEQRIAQFMDTFALDEELFDSAAEEMVLQEETTAERKAVNR.

Substrate is bound by residues 49-52 (TCNR), serine 109, 114-116 (ETQ), and glutamine 120. The Nucleophile role is filled by cysteine 50. NADP(+) is bound at residue 189–194 (GAGETG).

Belongs to the glutamyl-tRNA reductase family. In terms of assembly, homodimer.

It carries out the reaction (S)-4-amino-5-oxopentanoate + tRNA(Glu) + NADP(+) = L-glutamyl-tRNA(Glu) + NADPH + H(+). Its pathway is porphyrin-containing compound metabolism; protoporphyrin-IX biosynthesis; 5-aminolevulinate from L-glutamyl-tRNA(Glu): step 1/2. Catalyzes the NADPH-dependent reduction of glutamyl-tRNA(Glu) to glutamate 1-semialdehyde (GSA). The sequence is that of Glutamyl-tRNA reductase from Exiguobacterium sibiricum (strain DSM 17290 / CCUG 55495 / CIP 109462 / JCM 13490 / 255-15).